The following is an 88-amino-acid chain: Small ribosomal subunit protein bS20 (88 aa).

It belongs to the bacterial ribosomal protein bS20 family.

Functionally, binds directly to 16S ribosomal RNA. The sequence is that of Small ribosomal subunit protein bS20 from Renibacterium salmoninarum (strain ATCC 33209 / DSM 20767 / JCM 11484 / NBRC 15589 / NCIMB 2235).